The following is a 176-amino-acid chain: Large ribosomal subunit protein uL10 (176 aa).

This sequence belongs to the universal ribosomal protein uL10 family. Part of the ribosomal stalk of the 50S ribosomal subunit. The N-terminus interacts with L11 and the large rRNA to form the base of the stalk. The C-terminus forms an elongated spine to which L12 dimers bind in a sequential fashion forming a multimeric L10(L12)X complex.

Forms part of the ribosomal stalk, playing a central role in the interaction of the ribosome with GTP-bound translation factors. The chain is Large ribosomal subunit protein uL10 from Leuconostoc citreum (strain KM20).